A 60-amino-acid polypeptide reads, in one-letter code: Large ribosomal subunit protein bL32 (60 aa).

Residues 1–16 (MAVPRRKTSPSRRGMR) show a composition bias toward basic residues. Residues 1-60 (MAVPRRKTSPSRRGMRRSADAIKKPTYVEDKDSGELRRPHHLDLKTGMYKGRQVLKKKES) form a disordered region. Over residues 17-44 (RSADAIKKPTYVEDKDSGELRRPHHLDL) the composition is skewed to basic and acidic residues.

This sequence belongs to the bacterial ribosomal protein bL32 family.

The protein is Large ribosomal subunit protein bL32 of Bradyrhizobium diazoefficiens (strain JCM 10833 / BCRC 13528 / IAM 13628 / NBRC 14792 / USDA 110).